A 119-amino-acid polypeptide reads, in one-letter code: Host cell factor C1 regulator 1 (119 aa).

Residues 1–34 (MILQQPLERGPQGRAQRDPRAASGASGGLDAREP) form a disordered region. The interaction with HCFC1 stretch occupies residues 57 to 60 (DHPY). Residues 91–100 (IPEALRLLRL) carry the Nuclear export signal motif.

As to quaternary structure, interacts with HCFC1.

It is found in the cytoplasm. The protein resides in the nucleus. In terms of biological role, regulates HCFC1 activity by modulating its subcellular localization. Overexpression of HCFC1R1 leads to accumulation of HCFC1 in the cytoplasm. HCFC1R1-mediated export may provide the pool of cytoplasmic HCFC1 required for import of virion-derived VP16 into the nucleus. The sequence is that of Host cell factor C1 regulator 1 (HCFC1R1) from Bos taurus (Bovine).